Here is a 325-residue protein sequence, read N- to C-terminus: E3 ubiquitin-protein ligase SIAH2 (325 aa).

A compositionally biased stretch (polar residues) spans 1-15; the sequence is MSRPSSTGPSANKPC. The disordered stretch occupies residues 1–43; it reads MSRPSSTGPSANKPCSKQPPPPQTPHAPSPAAPPAAATISAAG. A Phosphoserine modification is found at Ser6. Ser16 carries the post-translational modification Phosphoserine; by DYRK2. Pro residues predominate over residues 17–33; that stretch reads KQPPPPQTPHAPSPAAP. Thr24 carries the post-translational modification Phosphothreonine; by MAPK14. Ser29 carries the post-translational modification Phosphoserine; by DYRK2 and MAPK14. Low complexity predominate over residues 34–43; sequence PAAATISAAG. Residue Ser69 is modified to Phosphoserine; by DYRK2. Residues 81-116 form an RING-type zinc finger; sequence CPVCFDYVLPPILQCQAGHLVCNQCRQKLSCCPTCR. Position 120 is a phosphothreonine; by DYRK2 (Thr120). The SBD stretch occupies residues 131 to 323; the sequence is VASAVLFPCK…LGINVTISTC (193 aa). The SIAH-type zinc finger occupies 134-194; it reads AVLFPCKYAT…VMSHLMHAHK (61 aa). Zn(2+) is bound by residues Cys139, Cys146, His158, Cys162, Cys169, Cys176, His188, and His193.

Belongs to the SINA (Seven in absentia) family. Homodimer. Interacts with UBE2E2. Interacts with VAV1, without mediating its ubiquitin-mediated degradation. Interacts with CACYBP/SIP. Probable component of some large E3 complex possibly composed of UBE2D1, SIAH2, CACYBP/SIP, SKP1, APC and TBL1X. Interacts with UBE2I. Interacts with PEG10, which may inhibit its activity. Interacts with EGLN2 and SNCAIP. Interacts with DYRK2. Interacts with PEG3. Interacts with NR1D1 and NR1D2. Interacts with DCC. Interacts with AXIN1. Post-translationally, phosphorylated at Ser-29 by DYRK2; this increases the ubiquitin ligase activity and promotes degradation of EGLN3. Phosphorylated at Thr-24 and Ser-29 by MAPK14, which mediates the degradation by the proteasome of EGLN3. Widely expressed at low level in embryos and adults. Expressed in a specific population of germ cells within both the mouse ovary and testis. Absent in primordial oocytes but expressed in all growing oocytes, coincident with their recruitment from the pool of quiescent cells. Its level of expression increases as the oocytes mature. Expressed in Graafian follicles and in fertilized zygotes up until the two cell stage, a time of extensive maternal transcript degradation and zygotic gene activation. Expressed in the testis from postmeiotic spermatids.

The protein resides in the cytoplasm. The protein localises to the nucleus. It catalyses the reaction S-ubiquitinyl-[E2 ubiquitin-conjugating enzyme]-L-cysteine + [acceptor protein]-L-lysine = [E2 ubiquitin-conjugating enzyme]-L-cysteine + N(6)-ubiquitinyl-[acceptor protein]-L-lysine.. It functions in the pathway protein modification; protein ubiquitination. Its function is as follows. E3 ubiquitin-protein ligase that mediates ubiquitination and subsequent proteasomal degradation of target proteins. E3 ubiquitin ligases accept ubiquitin from an E2 ubiquitin-conjugating enzyme in the form of a thioester and then directly transfers the ubiquitin to targeted substrates. Mediates E3 ubiquitin ligase activity either through direct binding to substrates or by functioning as the essential RING domain subunit of larger E3 complexes. Mediates ubiquitination and proteasomal degradation of DYRK2 in response to hypoxia. Promotes monoubiquitination of SNCA. Triggers the ubiquitin-mediated degradation of many substrates, including proteins involved in transcription regulation (GPS2, POU2AF1, PML, NCOR1), a cell surface receptor (DCC), an antiapoptotic protein (BAG1), and a protein involved in synaptic vesicle function in neurons (SYP). It is thereby involved in apoptosis, tumor suppression, cell cycle, transcription and signaling processes. Has some overlapping function with SIAH1. Triggers the ubiquitin-mediated degradation of TRAF2, whereas SIAH1 does not. Regulates cellular clock function via ubiquitination of the circadian transcriptional repressors NR1D1 and NR1D2 leading to their proteasomal degradation. Plays an important role in mediating the rhythmic degradation/clearance of NR1D1 and NR1D2 contributing to their circadian profile of protein abundance. Mediates ubiquitination and degradation of EGLN2 and EGLN3 in response to the unfolded protein response (UPR), leading to their degradation and subsequent stabilization of ATF4. Also part of the Wnt signaling pathway in which it mediates the Wnt-induced ubiquitin-mediated proteasomal degradation of AXIN1. The polypeptide is E3 ubiquitin-protein ligase SIAH2 (Siah2) (Mus musculus (Mouse)).